Here is a 306-residue protein sequence, read N- to C-terminus: Golgi to ER traffic protein 2 (306 aa).

The span at 1-18 (MSEISDAEKRRILREKRQ) shows a compositional bias: basic and acidic residues. The segment at 1 to 100 (MSEISDAEKR…PPGSAEQQNG (100 aa)) is disordered. The Cytoplasmic portion of the chain corresponds to 1-172 (MSEISDAEKR…VEAHNIAVNK (172 aa)). A compositionally biased stretch (polar residues) spans 34–57 (TGQTENSFLSTESPLDSRESTYPA). Basic and acidic residues predominate over residues 68-77 (DSTKQMDELL). The span at 78–90 (AKATSKTTSKASS) shows a compositional bias: low complexity. The segment covering 91-100 (PPGSAEQQNG) has biased composition (polar residues). A helical transmembrane segment spans residues 173-193 (LKSYTILVKWLFFLLPYLYYI). Residues 194–214 (THSARDPFQHNAVNYVLDRSN) lie on the Lumenal side of the membrane. Residues 215–234 (FFTVFTTFEIVALSVYYQLL) traverse the membrane as a helical segment. Residues 235-281 (MSAEKSHNVNTLDNNSKILKLVSMVPPGLVPIPNLRGKVAQALQYWD) are Cytoplasmic-facing. Residues 282-302 (VVSMYLTDLCFAIVLAGLFQY) traverse the membrane as a helical segment. Topologically, residues 303-306 (YHSM) are lumenal.

It belongs to the GET2 family. Component of the Golgi to ER traffic (GET) complex, which is composed of GET1, GET2 and GET3. Within the complex, GET1 and GET2 form a heterotetramer which is stabilized by phosphatidylinositol binding and which binds to the GET3 homodimer.

It localises to the endoplasmic reticulum membrane. The protein localises to the golgi apparatus membrane. Functionally, required for the post-translational delivery of tail-anchored (TA) proteins to the endoplasmic reticulum. Together with GET1, acts as a membrane receptor for soluble GET3, which recognizes and selectively binds the transmembrane domain of TA proteins in the cytosol. The GET complex cooperates with the HDEL receptor ERD2 to mediate the ATP-dependent retrieval of resident ER proteins that contain a C-terminal H-D-E-L retention signal from the Golgi to the ER. This Lachancea thermotolerans (strain ATCC 56472 / CBS 6340 / NRRL Y-8284) (Yeast) protein is Golgi to ER traffic protein 2.